The sequence spans 146 residues: NADPH-dependent 7-cyano-7-deazaguanine reductase (146 aa).

C48 functions as the Thioimide intermediate in the catalytic mechanism. D55 serves as the catalytic Proton donor. Substrate-binding positions include 70–72 (VES) and 89–90 (HE).

The protein belongs to the GTP cyclohydrolase I family. QueF type 1 subfamily.

Its subcellular location is the cytoplasm. It catalyses the reaction 7-aminomethyl-7-carbaguanine + 2 NADP(+) = 7-cyano-7-deazaguanine + 2 NADPH + 3 H(+). The protein operates within tRNA modification; tRNA-queuosine biosynthesis. In terms of biological role, catalyzes the NADPH-dependent reduction of 7-cyano-7-deazaguanine (preQ0) to 7-aminomethyl-7-deazaguanine (preQ1). This chain is NADPH-dependent 7-cyano-7-deazaguanine reductase, found in Helicobacter pylori (strain Shi470).